A 428-amino-acid chain; its full sequence is Glutamate-1-semialdehyde 2,1-aminomutase (428 aa).

Residue K265 is modified to N6-(pyridoxal phosphate)lysine.

Belongs to the class-III pyridoxal-phosphate-dependent aminotransferase family. HemL subfamily. In terms of assembly, homodimer. Requires pyridoxal 5'-phosphate as cofactor.

It localises to the cytoplasm. The enzyme catalyses (S)-4-amino-5-oxopentanoate = 5-aminolevulinate. It functions in the pathway porphyrin-containing compound metabolism; protoporphyrin-IX biosynthesis; 5-aminolevulinate from L-glutamyl-tRNA(Glu): step 2/2. The sequence is that of Glutamate-1-semialdehyde 2,1-aminomutase from Shewanella sediminis (strain HAW-EB3).